A 122-amino-acid polypeptide reads, in one-letter code: Ribosomal protein eL22-like 1 (122 aa).

Ser-112, Ser-118, and Ser-120 each carry phosphoserine.

The protein belongs to the eukaryotic ribosomal protein eL22 family.

The polypeptide is Ribosomal protein eL22-like 1 (Rpl22l1) (Mus musculus (Mouse)).